Consider the following 825-residue polypeptide: KH domain-containing protein YLL032C (825 aa).

Residues 482–556 (PAEESFFIPE…ANICLAKNDL (75 aa)) form the KH domain. Residues 727-740 (SSKSNTSNSNTNGN) show a composition bias toward low complexity. Residues 727–766 (SSKSNTSNSNTNGNFRSMNNAKSRTTIDNTSQSGASPQRH) form a disordered region. Residues 741–762 (FRSMNNAKSRTTIDNTSQSGAS) show a composition bias toward polar residues. The residue at position 762 (Ser-762) is a Phosphoserine.

It localises to the cytoplasm. In Saccharomyces cerevisiae (strain ATCC 204508 / S288c) (Baker's yeast), this protein is KH domain-containing protein YLL032C.